Reading from the N-terminus, the 110-residue chain is UPF0060 membrane protein Rpic_4131 (110 aa).

Transmembrane regions (helical) follow at residues 8–28 (VLFA…WLVL), 33–53 (PFWL…LLTL), 65–85 (YGGV…GVAL), and 88–108 (WDVG…LQPQ).

This sequence belongs to the UPF0060 family.

The protein resides in the cell inner membrane. The polypeptide is UPF0060 membrane protein Rpic_4131 (Ralstonia pickettii (strain 12J)).